A 1255-amino-acid polypeptide reads, in one-letter code: Pre-mRNA-splicing factor ATP-dependent RNA helicase DEAH7 (1255 aa).

Residues 1–316 (MGVDPFKTTE…SDEDRSQGAE (316 aa)) are disordered. Residues 13–60 (EADKETNGGVPVKDKLTFKAPERKSRLGLDARAIEKKDNAKTEGEFKV) are compositionally biased toward basic and acidic residues. The span at 109–137 (AQESTVTTENAGTSDISITPRTLSCTSSY) shows a compositional bias: polar residues. 2 short sequence motifs (nuclear localization signal) span residues 144–153 (RHREEHRRDR) and 172–191 (RRRESYRQSDRDYHGEKRRR). A compositionally biased stretch (basic and acidic residues) spans 144–219 (RHREEHRRDR…EWERSPHGDR (76 aa)). Composition is skewed to low complexity over residues 220–240 (GSSYSRRPQPSPSPMLAAASP) and 271–290 (PIRASGSSIRSSSSRYGGRS). Residues 297–316 (REGDLTNEGHSDEDRSQGAE) show a composition bias toward basic and acidic residues. In terms of domain architecture, Helicase ATP-binding spans 568-731 (LQVIRENQVI…FGSVPIFNIP (164 aa)). 581–588 (GETGSGKT) contributes to the ATP binding site. The DEAH box signature appears at 678–681 (DEAH). Positions 753-933 (AVKQAMTIHI…NVVLLLKSLK (181 aa)) constitute a Helicase C-terminal domain. A compositionally biased stretch (basic and acidic residues) spans 1190–1224 (LEHKKKQKEEKSGMEEEMEKLRRDQVESELRSKER). The interval 1190–1255 (LEHKKKQKEE…TFLRPKKLGL (66 aa)) is disordered.

Belongs to the DEAD box helicase family. DEAH subfamily. PRP16 sub-subfamily. Interacts with the Phytophthora PSR1 protein.

Its subcellular location is the nucleus. The catalysed reaction is ATP + H2O = ADP + phosphate + H(+). Its function is as follows. Involved in pre-mRNA splicing by mediating structural transitions of the spliceosome during the catalytic step. Facilitates expression of genes involved in auxin-mediated development including male-gametophyte transmission, apical-basal patterning of embryonic and gynoecium development, stamen development, phyllotactic flower positioning, and vascular development. Also involved in root-meristem maintenance and planar polarity of root-hair positioning. Acts as a component of RNA silencing that regulates distinct classes of endogenous small RNAs. Functions as a positive regulator of plant immunity. This chain is Pre-mRNA-splicing factor ATP-dependent RNA helicase DEAH7, found in Arabidopsis thaliana (Mouse-ear cress).